We begin with the raw amino-acid sequence, 345 residues long: Phosphoribosylformylglycinamidine cyclo-ligase (345 aa).

Belongs to the AIR synthase family.

It localises to the cytoplasm. The enzyme catalyses 2-formamido-N(1)-(5-O-phospho-beta-D-ribosyl)acetamidine + ATP = 5-amino-1-(5-phospho-beta-D-ribosyl)imidazole + ADP + phosphate + H(+). It participates in purine metabolism; IMP biosynthesis via de novo pathway; 5-amino-1-(5-phospho-D-ribosyl)imidazole from N(2)-formyl-N(1)-(5-phospho-D-ribosyl)glycinamide: step 2/2. The sequence is that of Phosphoribosylformylglycinamidine cyclo-ligase from Bifidobacterium longum (strain DJO10A).